A 577-amino-acid polypeptide reads, in one-letter code: Origin recognition complex subunit 2 (577 aa).

An Involved in LRWD1-binding repeat occupies 1–100 (MSKPELKEDK…GNKVYSFQNR (100 aa)). The disordered stretch occupies residues 81–199 (SLKNGSATGG…DDEGVAQEHE (119 aa)). Threonine 116 bears the Phosphothreonine mark. 2 positions are modified to phosphoserine: serine 122 and serine 138. Residues 143–157 (SASDKVQPKNNDKSE) show a composition bias toward basic and acidic residues. The span at 188–199 (SEDDEGVAQEHE) shows a compositional bias: acidic residues. Residue threonine 226 is modified to Phosphothreonine. 2 positions are modified to phosphoserine: serine 248 and serine 280.

It belongs to the ORC2 family. As to quaternary structure, component of ORC, a complex composed of at least 6 subunits: ORC1, ORC2, ORC3, ORC4, ORC5 and ORC6. ORC is regulated in a cell-cycle dependent manner. It is sequentially assembled at the exit from anaphase of mitosis and disassembled as cells enter S phase. Interacts with DBF4. Interacts with MCM10. Interacts with LRWD1 throughout the cell cycle; this interaction, which occurs only with non-ubiquitinated form of LRWD1, prevents LRWD1 ubiquitination and hence stabilizes the protein. Interacts with POLQ.

Its subcellular location is the nucleus. In terms of biological role, component of the origin recognition complex (ORC) that binds origins of replication. DNA-binding is ATP-dependent. The specific DNA sequences that define origins of replication have not been identified yet. ORC is required to assemble the pre-replication complex necessary to initiate DNA replication. Binds histone H3 and H4 trimethylation marks H3K9me3, H3K20me3 and H4K27me3. Stabilizes LRWD1, by protecting it from ubiquitin-mediated proteasomal degradation. Also stabilizes ORC3. In Homo sapiens (Human), this protein is Origin recognition complex subunit 2 (ORC2).